Reading from the N-terminus, the 249-residue chain is tRNA pseudouridine synthase A (249 aa).

Asp-53 functions as the Nucleophile in the catalytic mechanism. Tyr-111 is a substrate binding site.

The protein belongs to the tRNA pseudouridine synthase TruA family. Homodimer.

The enzyme catalyses uridine(38/39/40) in tRNA = pseudouridine(38/39/40) in tRNA. Its function is as follows. Formation of pseudouridine at positions 38, 39 and 40 in the anticodon stem and loop of transfer RNAs. This Streptococcus mutans serotype c (strain ATCC 700610 / UA159) protein is tRNA pseudouridine synthase A.